Consider the following 250-residue polypeptide: tRNA (guanine-N(1)-)-methyltransferase (250 aa).

Residues Gly-116 and 136 to 141 (IGDYVL) each bind S-adenosyl-L-methionine.

It belongs to the RNA methyltransferase TrmD family. Homodimer.

It is found in the cytoplasm. The enzyme catalyses guanosine(37) in tRNA + S-adenosyl-L-methionine = N(1)-methylguanosine(37) in tRNA + S-adenosyl-L-homocysteine + H(+). Functionally, specifically methylates guanosine-37 in various tRNAs. This is tRNA (guanine-N(1)-)-methyltransferase from Pseudomonas fluorescens (strain ATCC BAA-477 / NRRL B-23932 / Pf-5).